Consider the following 321-residue polypeptide: uncharacterized protein (321 aa).

Residues 1–80 (MQGGQEVGRE…GELSGGWGEF (80 aa)) form a disordered region.

This is an uncharacterized protein from Mus musculus (Mouse).